Reading from the N-terminus, the 150-residue chain is uncharacterized protein (150 aa).

The first 23 residues, 1–23, serve as a signal peptide directing secretion; it reads MYSILIACLVLLLCLIIYVGHRA.

This sequence belongs to the asfivirus EP152R family.

Its subcellular location is the virion. This is an uncharacterized protein from African swine fever virus (isolate Warthog/Namibia/Wart80/1980) (ASFV).